Here is a 135-residue protein sequence, read N- to C-terminus: D-ribose pyranase (135 aa).

The Proton donor role is filled by His20. Substrate is bound by residues Asp28, His102, and 124–126; that span reads YAN.

This sequence belongs to the RbsD / FucU family. RbsD subfamily. As to quaternary structure, homodecamer.

It localises to the cytoplasm. The catalysed reaction is beta-D-ribopyranose = beta-D-ribofuranose. It participates in carbohydrate metabolism; D-ribose degradation; D-ribose 5-phosphate from beta-D-ribopyranose: step 1/2. Catalyzes the interconversion of beta-pyran and beta-furan forms of D-ribose. The chain is D-ribose pyranase from Rhodopirellula baltica (strain DSM 10527 / NCIMB 13988 / SH1).